The primary structure comprises 434 residues: Serine--tRNA ligase (434 aa).

239–241 (TAE) lines the L-serine pocket. 270–272 (RSE) contributes to the ATP binding site. Residue glutamate 293 participates in L-serine binding. 357–360 (EISS) serves as a coordination point for ATP. Residue serine 393 participates in L-serine binding.

Belongs to the class-II aminoacyl-tRNA synthetase family. Type-1 seryl-tRNA synthetase subfamily. As to quaternary structure, homodimer. The tRNA molecule binds across the dimer.

The protein localises to the cytoplasm. It carries out the reaction tRNA(Ser) + L-serine + ATP = L-seryl-tRNA(Ser) + AMP + diphosphate + H(+). The enzyme catalyses tRNA(Sec) + L-serine + ATP = L-seryl-tRNA(Sec) + AMP + diphosphate + H(+). It functions in the pathway aminoacyl-tRNA biosynthesis; selenocysteinyl-tRNA(Sec) biosynthesis; L-seryl-tRNA(Sec) from L-serine and tRNA(Sec): step 1/1. Its function is as follows. Catalyzes the attachment of serine to tRNA(Ser). Is also able to aminoacylate tRNA(Sec) with serine, to form the misacylated tRNA L-seryl-tRNA(Sec), which will be further converted into selenocysteinyl-tRNA(Sec). The chain is Serine--tRNA ligase from Mesorhizobium japonicum (strain LMG 29417 / CECT 9101 / MAFF 303099) (Mesorhizobium loti (strain MAFF 303099)).